Reading from the N-terminus, the 345-residue chain is Beta-2-glycoprotein 1 (345 aa).

Residues 1-19 form the signal peptide; it reads MISLGLILFSSVLCHVATA. Sushi domains lie at 21 to 81, 82 to 139, 140 to 202, and 203 to 262; these read RTCP…RCIP, RVCP…VCTR, VTCP…ECRE, and VKCP…SCKA. 11 cysteine pairs are disulfide-bonded: cysteine 23–cysteine 66, cysteine 51–cysteine 79, cysteine 84–cysteine 124, cysteine 110–cysteine 137, cysteine 142–cysteine 188, cysteine 174–cysteine 200, cysteine 205–cysteine 248, cysteine 234–cysteine 260, cysteine 264–cysteine 315, cysteine 300–cysteine 325, and cysteine 307–cysteine 345. Threonine 33 carries an O-linked (GalNAc...) threonine glycan. Asparagine 117, asparagine 162, asparagine 183, and asparagine 193 each carry an N-linked (GlcNAc...) asparagine glycan. An N-linked (GlcNAc...) asparagine glycan is attached at asparagine 253. The sushi-like stretch occupies residues 263-345; the sequence is SCKLSVKKAT…KTDASDVKPC (83 aa).

In terms of tissue distribution, expressed by the liver and secreted in plasma.

It is found in the secreted. In terms of biological role, binds to various kinds of negatively charged substances such as heparin, phospholipids, and dextran sulfate. May prevent activation of the intrinsic blood coagulation cascade by binding to phospholipids on the surface of damaged cells. In Canis lupus familiaris (Dog), this protein is Beta-2-glycoprotein 1 (APOH).